The chain runs to 187 residues: UPF0301 protein YqgE (187 aa).

The protein belongs to the UPF0301 (AlgH) family.

The polypeptide is UPF0301 protein YqgE (Escherichia coli O7:K1 (strain IAI39 / ExPEC)).